Reading from the N-terminus, the 633-residue chain is Probable potassium transport system protein Kup 2 (633 aa).

Transmembrane regions (helical) follow at residues 18-38 (FVGL…TSPL), 61-81 (LISL…VLFL), 107-127 (VPVL…DAMI), 143-163 (ITPA…IVLF), 176-196 (FFGP…VIHI), 211-231 (ALSF…AVFL), 255-275 (WFVL…ALVL), 293-313 (ALLP…QAVI), 345-365 (IYVP…IFSF), 371-391 (LATA…MLAF), 402-422 (FMLA…FLAA), and 429-449 (DGGW…WTWT).

This sequence belongs to the HAK/KUP transporter (TC 2.A.72) family.

It localises to the cell inner membrane. The catalysed reaction is K(+)(in) + H(+)(in) = K(+)(out) + H(+)(out). Functionally, transport of potassium into the cell. Likely operates as a K(+):H(+) symporter. The polypeptide is Probable potassium transport system protein Kup 2 (Rhizobium etli (strain ATCC 51251 / DSM 11541 / JCM 21823 / NBRC 15573 / CFN 42)).